A 305-amino-acid polypeptide reads, in one-letter code: Formamidopyrimidine-DNA glycosylase (305 aa).

The active-site Schiff-base intermediate with DNA is the Pro2. Glu3 functions as the Proton donor in the catalytic mechanism. The active-site Proton donor; for beta-elimination activity is the Lys59. Residues His92, Arg111, and Arg154 each contribute to the DNA site. Residues Gln239 to Pro273 form an FPG-type zinc finger. The active-site Proton donor; for delta-elimination activity is Arg263. The disordered stretch occupies residues Pro282–Glu305.

This sequence belongs to the FPG family. As to quaternary structure, monomer. Requires Zn(2+) as cofactor.

The catalysed reaction is Hydrolysis of DNA containing ring-opened 7-methylguanine residues, releasing 2,6-diamino-4-hydroxy-5-(N-methyl)formamidopyrimidine.. It carries out the reaction 2'-deoxyribonucleotide-(2'-deoxyribose 5'-phosphate)-2'-deoxyribonucleotide-DNA = a 3'-end 2'-deoxyribonucleotide-(2,3-dehydro-2,3-deoxyribose 5'-phosphate)-DNA + a 5'-end 5'-phospho-2'-deoxyribonucleoside-DNA + H(+). Involved in base excision repair of DNA damaged by oxidation or by mutagenic agents. Acts as a DNA glycosylase that recognizes and removes damaged bases. Has a preference for oxidized purines, such as 7,8-dihydro-8-oxoguanine (8-oxoG). Has AP (apurinic/apyrimidinic) lyase activity and introduces nicks in the DNA strand. Cleaves the DNA backbone by beta-delta elimination to generate a single-strand break at the site of the removed base with both 3'- and 5'-phosphates. The chain is Formamidopyrimidine-DNA glycosylase from Symbiobacterium thermophilum (strain DSM 24528 / JCM 14929 / IAM 14863 / T).